We begin with the raw amino-acid sequence, 546 residues long: MDYKKLADMLFPHITKSVSYYEDVVFPARNLSPGAKVTRLAPSPTGFIHLGNLYGAFVDERLAHQSNGVFILRIEDTDDKRKVEGAVETIISSLEFFNLKFDEGAGINGETGNYGPYFQSNRAEIYQTVAKHLVEMGRAYPCFCSEEELEEIRKQQLAENVNTGYYGKWAVHRNLTLEEVQKHLENNESFVIRFKSMGNPEETFEIDDAIRGRLSMQVNFQDIVLLKANGIPTYHFAHVVDDHLMRVTHVVRGEEWLSTLPIHYELFTTLGWDLPVYCHTAHLMKIDNGVKRKLSKRKDPELGLEYYMQLGYHPAAVREYLMTILNSNFEEWRIQNPDSDINDFPFSLNKMSNSGALFDLDKLNDVSKNVLAKIPAEEIYEFLLKWAKEYKKEIVNLLEEHKDSVIKLLSVGRNSEKPRKDLIYCEQIFEFIKYFFDEYFAIVDKYPDNVDEEEAKKILKAYLETYDHNDDQTQWFEKIKVIATENGYAAKPKDYKKNPDMYKGHVGDVSTVIRIAIVGRSSSPDLWEIQQIMGEEKVRERIQRLL.

The 'HIGH' region motif lies at 42–52; sequence PSPTGFIHLGN. A 'KMSKS' region motif is present at residues 293 to 297; that stretch reads KLSKR. ATP is bound at residue Lys296.

Belongs to the class-I aminoacyl-tRNA synthetase family. Glutamate--tRNA ligase type 1 subfamily. In terms of assembly, monomer.

It is found in the cytoplasm. It catalyses the reaction tRNA(Glu) + L-glutamate + ATP = L-glutamyl-tRNA(Glu) + AMP + diphosphate. Its function is as follows. Catalyzes the attachment of glutamate to tRNA(Glu) in a two-step reaction: glutamate is first activated by ATP to form Glu-AMP and then transferred to the acceptor end of tRNA(Glu). This is Glutamate--tRNA ligase from Acetivibrio thermocellus (strain ATCC 27405 / DSM 1237 / JCM 9322 / NBRC 103400 / NCIMB 10682 / NRRL B-4536 / VPI 7372) (Clostridium thermocellum).